A 745-amino-acid chain; its full sequence is Multiple C2 domain and transmembrane region protein 13 (745 aa).

Residues 1–30 (MAANKDEFSVKQISPKLGGERGARNPYGPT) form a disordered region. 3 C2 domains span residues 21–139 (RGAR…PQRY), 171–293 (DASE…SAPA), and 326–453 (AEES…ACSY). Ca(2+) is bound by residues Asp-56, Asp-61, Asp-106, and Asn-110. The next 2 helical transmembrane spans lie at 568 to 588 (SLIV…LVGL) and 688 to 708 (FYCW…PMWL).

This sequence belongs to the MCTP family. Ca(2+) serves as cofactor. Expressed in incipient leaf primordia.

It is found in the cell membrane. It localises to the cytoplasm. Its function is as follows. May function as a signaling molecule by regulating the trafficking of other regulators. The protein is Multiple C2 domain and transmembrane region protein 13 of Arabidopsis thaliana (Mouse-ear cress).